The chain runs to 132 residues: UPF0212 protein PYRAB08340 (132 aa).

It belongs to the UPF0212 family.

This Pyrococcus abyssi (strain GE5 / Orsay) protein is UPF0212 protein PYRAB08340.